Reading from the N-terminus, the 440-residue chain is Histidinol dehydrogenase (440 aa).

Positions 136, 197, and 220 each coordinate NAD(+). Substrate contacts are provided by S243, Q265, and H268. The Zn(2+) site is built by Q265 and H268. Residues E333 and H334 each act as proton acceptor in the active site. The substrate site is built by H334, D367, E421, and H426. D367 is a binding site for Zn(2+). H426 contacts Zn(2+).

This sequence belongs to the histidinol dehydrogenase family. Requires Zn(2+) as cofactor.

The enzyme catalyses L-histidinol + 2 NAD(+) + H2O = L-histidine + 2 NADH + 3 H(+). The protein operates within amino-acid biosynthesis; L-histidine biosynthesis; L-histidine from 5-phospho-alpha-D-ribose 1-diphosphate: step 9/9. Catalyzes the sequential NAD-dependent oxidations of L-histidinol to L-histidinaldehyde and then to L-histidine. The sequence is that of Histidinol dehydrogenase from Pseudomonas aeruginosa (strain ATCC 15692 / DSM 22644 / CIP 104116 / JCM 14847 / LMG 12228 / 1C / PRS 101 / PAO1).